Reading from the N-terminus, the 581-residue chain is Proline--tRNA ligase (581 aa).

The protein belongs to the class-II aminoacyl-tRNA synthetase family. ProS type 1 subfamily. As to quaternary structure, homodimer.

It is found in the cytoplasm. It catalyses the reaction tRNA(Pro) + L-proline + ATP = L-prolyl-tRNA(Pro) + AMP + diphosphate. Its function is as follows. Catalyzes the attachment of proline to tRNA(Pro) in a two-step reaction: proline is first activated by ATP to form Pro-AMP and then transferred to the acceptor end of tRNA(Pro). As ProRS can inadvertently accommodate and process non-cognate amino acids such as alanine and cysteine, to avoid such errors it has two additional distinct editing activities against alanine. One activity is designated as 'pretransfer' editing and involves the tRNA(Pro)-independent hydrolysis of activated Ala-AMP. The other activity is designated 'posttransfer' editing and involves deacylation of mischarged Ala-tRNA(Pro). The misacylated Cys-tRNA(Pro) is not edited by ProRS. This Paracidovorax citrulli (strain AAC00-1) (Acidovorax citrulli) protein is Proline--tRNA ligase.